A 163-amino-acid chain; its full sequence is uncharacterized protein (163 aa).

Topologically, residues 1-33 are cytoplasmic; that stretch reads MKTLDKITNYDLFDFADEFLKFVPVFRPNPTVT. A helical membrane pass occupies residues 34–54; that stretch reads CLFGNPLTNLLVNGTGAACFF. The Extracellular portion of the chain corresponds to 55 to 117; it reads EFCSLALIKV…SLGMALPDDD (63 aa). The helical transmembrane segment at 118 to 138 threads the bilayer; sequence VLLSITFWFLCNSSFSILFVF. Over 139-163 the chain is Cytoplasmic; sequence ELRIFLRTVNNLLVVFLSVLKRNDL.

It is found in the membrane. This is an uncharacterized protein from Saccharomyces cerevisiae (strain ATCC 204508 / S288c) (Baker's yeast).